A 710-amino-acid chain; its full sequence is Amyloid beta precursor protein binding family B member 1 (710 aa).

At Ser135 the chain carries Phosphoserine. Disordered stretches follow at residues Glu143–Pro256 and Gly276–Leu300. A compositionally biased stretch (acidic residues) spans Gly145–Leu173. Residue Lys204 is modified to N6-acetyllysine. Over residues Ser223–Tyr234 the composition is skewed to polar residues. One can recognise a WW domain in the interval Ser253–Arg285. Over residues Ser287–Gln299 the composition is skewed to low complexity. Residues Phe370–Ala509 form the PID 1 domain. Ser459 carries the post-translational modification Phosphoserine; by PKC. Ser517 carries the post-translational modification Phosphoserine. A PID 2 domain is found at Lys542–Ser699. Phosphotyrosine; by ABL1 is present on Tyr547. Ser610 bears the Phosphoserine; by SGK1 mark. N6-acetyllysine is present on Lys701.

Component of a complex, at least composed of APBB1, RASD1/DEXRAS1 and APP. Interacts (via PID domain 2) with APP (with the intracellular domain of the amyloid-beta precursor protein). Interacts (via PID domain 2) with RASD1/DEXRAS1; impairs the transcription activation activity. Interacts (via PID domain 1) with KAT5/TIP60. Interacts (via the WW domain) with the proline-rich region of APBB1IP. Interacts with TSHZ1 and TSHZ2. Interacts (via the WW domain) with histone H2AX (when phosphorylated on 'Tyr-142') and the proline-rich region of ENAH. Interacts with MAPK8. Interacts (via PID domain 1) with TSHZ3 (via homeobox domain). Interacts with SET. Found in a trimeric complex with HDAC1 and TSHZ3; the interaction between HDAC1 and APBB1 is mediated by TSHZ3. Interacts (via WWW domain) with NEK6. Interacts (via WWW domain) with ABL1. Interacts with RNF157. Interacts with ARF6. In terms of processing, polyubiquitination by RNF157 leads to degradation by the proteasome. Phosphorylation at Ser-610 by SGK1 promotes its localization to the nucleus. Phosphorylated following nuclear translocation. Phosphorylation at Tyr-546 by ABL1 enhances transcriptional activation activity and reduces the affinity for RASD1/DEXRAS1. Post-translationally, acetylation at Lys-204 and Lys-701 by KAT5 promotes its transcription activator activity. Phosphorylated at Ser-459 by PKC upon insulin activation. As to expression, expressed in the brain, retinal lens and muscle cells (at protein level).

Its subcellular location is the cell membrane. The protein resides in the cytoplasm. It is found in the nucleus. It localises to the cell projection. The protein localises to the growth cone. Its subcellular location is the nucleus speckle. Its function is as follows. Transcription coregulator that can have both coactivator and corepressor functions. Adapter protein that forms a transcriptionally active complex with the gamma-secretase-derived amyloid precursor protein (APP) intracellular domain. Plays a central role in the response to DNA damage by translocating to the nucleus and inducing apoptosis. May act by specifically recognizing and binding histone H2AX phosphorylated on 'Tyr-142' (H2AXY142ph) at double-strand breaks (DSBs), recruiting other pro-apoptosis factors such as MAPK8/JNK1. Required for histone H4 acetylation at double-strand breaks (DSBs). Its ability to specifically bind modified histones and chromatin modifying enzymes such as KAT5/TIP60, probably explains its transcription activation activity. Functions in association with TSHZ3, SET and HDAC factors as a transcriptional repressor, that inhibits the expression of CASP4. Associates with chromatin in a region surrounding the CASP4 transcriptional start site(s). Involved in hippocampal neurite branching and neuromuscular junction formation, as a result plays a role in spatial memory functioning. Plays a role in the maintenance of lens transparency. May play a role in muscle cell strength. Acts as a molecular adapter that functions in neurite outgrowth by activating the RAC1-ARF6 axis upon insulin treatment. The chain is Amyloid beta precursor protein binding family B member 1 from Mus musculus (Mouse).